Consider the following 105-residue polypeptide: DNA-directed RNA polymerase subunit Rpo13 (105 aa).

Basic and acidic residues-rich tracts occupy residues 1-10 (MSEDDSKKEP) and 70-80 (FDDVARSYSKA). Disordered regions lie at residues 1 to 35 (MSED…GGEF) and 70 to 105 (FDDV…EEEE). Over residues 81 to 97 (DKKKRRVEKKPKKGKVT) the composition is skewed to basic residues.

The protein belongs to the archaeal Rpo13 RNA polymerase subunit family. As to quaternary structure, part of the 13-subunit RNA polymerase.

The protein localises to the cytoplasm. The enzyme catalyses RNA(n) + a ribonucleoside 5'-triphosphate = RNA(n+1) + diphosphate. Functionally, DNA-dependent RNA polymerase catalyzes the transcription of DNA into RNA using the four ribonucleoside triphosphates as substrates. In vitro binds dsDNA but not ssDNA. The sequence is that of DNA-directed RNA polymerase subunit Rpo13 from Sulfolobus acidocaldarius (strain ATCC 33909 / DSM 639 / JCM 8929 / NBRC 15157 / NCIMB 11770).